A 324-amino-acid chain; its full sequence is Interactor of constitutive active ROPs 4 (324 aa).

Disordered regions lie at residues M1–E74, L91–E156, S175–E201, and F289–K324. Over residues Q13 to S28 the composition is skewed to low complexity. 3 stretches are compositionally biased toward basic and acidic residues: residues D29–S50, E95–H106, and P118–E156. Positions S62 to G266 form a coiled coil. Positions M313–K324 are enriched in basic and acidic residues.

Belongs to the ICR family. As to quaternary structure, interacts with ARAC11 in vitro.

Acts as a scaffold, mediating interaction of ROPs with different proteins. The polypeptide is Interactor of constitutive active ROPs 4 (ICR4) (Arabidopsis thaliana (Mouse-ear cress)).